A 1069-amino-acid chain; its full sequence is Thyrotropin-releasing hormone-degrading ectoenzyme (1069 aa).

Residues 1–11 (MALDGELGEQE) show a composition bias toward acidic residues. A disordered region spans residues 1–46 (MALDGELGEQEEEKKKKKKKKRKKKKEEEEEEEGAEKSSSPFAAAM). Residues 1–85 (MALDGELGEQ…ERHIAVHKRL (85 aa)) are Cytoplasmic-facing. Residues 15–25 (KKKKKKKRKKK) are compositionally biased toward basic residues. A helical; Signal-anchor for type II membrane protein transmembrane segment spans residues 86-106 (VLAFAVSLVALLAVTMLAVLL). The Extracellular segment spans residues 107-1069 (SLRFDECGAS…FQWLGKALRH (963 aa)). The tract at residues 117 to 179 (ATPGADGGPS…PSEEEREPWE (63 aa)) is disordered. Residues 121 to 136 (ADGGPSGFPERGGNGS) are compositionally biased toward gly residues. N-linked (GlcNAc...) asparagine glycosylation is found at N134, N205, N220, N267, and N383. 449-453 (AAMEN) is a binding site for substrate. Zn(2+) is bound at residue H485. E486 acts as the Proton acceptor in catalysis. H489 and E508 together coordinate Zn(2+). N-linked (GlcNAc...) asparagine glycosylation is found at N650, N679, N694, N708, N729, N845, and N951.

The protein belongs to the peptidase M1 family. In terms of assembly, homodimer; disulfide-linked. Zn(2+) serves as cofactor. As to expression, predominantly expressed in brain.

It is found in the membrane. It catalyses the reaction Release of the N-terminal pyroglutamyl group from pGlu-|-His-Xaa tripeptides and pGlu-|-His-Xaa-Gly tetrapeptides.. In terms of biological role, specific inactivation of TRH after its release. The chain is Thyrotropin-releasing hormone-degrading ectoenzyme (TRHDE) from Homo sapiens (Human).